We begin with the raw amino-acid sequence, 870 residues long: MHMRLNKRRRNHVQEQMSELPQDAKNDSLAAAQVIFKRHADNANSTPPSPVGLDSAGHLDKQADTAQRVHKVGTPSGTSSSHNSGNEGMHKVTKPLGENTATTAPIAIKQPVRVVRASPTAIVSPTSHTPLDAATAAANVVAEKSKIRTTQQQLQDKKRRDIENAHHAASAAAVTSSNLAVGSPPSQYIPSVPTLNVTSPQMRNSSQNIDRRSKSNEEAHNGHEKMMNSRSNSINSSTIKGSVSEPNTVTPLRQNSPSNMDDIIQKMEAVDIDEGRKNSFVMNGSGDSVDSLKPNVVRRPMRTPSGRRVRPPSPIDKIGSIQEPHLESTGFNDQNDFSEMSSLIDGSSSEDITKIRGSGIRERSPVDGVEHGGMSVNIPMQRSLSSDVLSPSQQAAMVAATKLSPSTQTLPVEELEYLASTGDVSAYKALNKINGTNMAYKGTIPDLIPSRARAQKTSKLKFKIFGGGKNSDRRNNATPIGYDPVMNISTDFGGKKVVESNQNNVKFKTTMRSQKYLGNDNLDDNDLRTQYIDDDDDDDDYDSAYEDLDYSRDDSEAMYKGDRESSNPRSNSLLQSSSYSGKVGFNSNANSGTSINNSGNVSNLDYSLRDGVAEKKKSRRDKIKKKLKSTASVVPYYPHYALTHLASGVSTVNSNLNNSNKNTKWFNEDKPWKSHKDVGFVTSQERKRYEAMWVTNRYLYLNLLPWWPKEEVEKDEDDSASNLNSNASTNVGGVLSDGDNEEDDVTRFLLSLPADGLMLNLVAKDIWERSNLPNDLLKQIYDLVDTRKDGTLNRESFLVGMWLVDQCLYGRKLPQELDPKIWDSVDRWVLNVVNSTMMTALERKQKKKMMKKELKNIKREQKQAIAEQHN.

Residues 1 to 11 show a composition bias toward basic residues; it reads MHMRLNKRRRN. 7 disordered regions span residues 1–25, 38–57, 62–92, 147–260, 275–315, 516–579, and 717–738; these read MHMRLNKRRRNHVQEQMSELPQDAK, RHADNANSTPPSPVGLDSAG, QADTAQRVHKVGTPSGTSSSHNSGNEGMHKV, IRTT…PSNM, GRKN…PSPI, YLGN…SSSY, and DDSASNLNSNASTNVGGVLSDG. Positions 75–86 are enriched in polar residues; the sequence is PSGTSSSHNSGN. Positions 155-166 are enriched in basic and acidic residues; the sequence is QDKKRRDIENAH. A compositionally biased stretch (low complexity) spans 167–181; the sequence is HAASAAAVTSSNLAV. Residues 184-208 show a composition bias toward polar residues; it reads PPSQYIPSVPTLNVTSPQMRNSSQN. Basic and acidic residues predominate over residues 209–227; sequence IDRRSKSNEEAHNGHEKMM. Low complexity predominate over residues 228-237; sequence NSRSNSINSS. Residues 238–259 are compositionally biased toward polar residues; it reads TIKGSVSEPNTVTPLRQNSPSN. The segment covering 299 to 310 has biased composition (basic residues); the sequence is RPMRTPSGRRVR. The segment covering 532 to 548 has biased composition (acidic residues); it reads IDDDDDDDDYDSAYEDL. Over residues 549–566 the composition is skewed to basic and acidic residues; the sequence is DYSRDDSEAMYKGDRESS. Low complexity-rich tracts occupy residues 567 to 579 and 720 to 730; these read NPRSNSLLQSSSY and ASNLNSNASTN. Positions 739–828 constitute an EH domain; sequence DNEEDDVTRF…PKIWDSVDRW (90 aa).

This sequence belongs to the IRS4 family.

In terms of biological role, positive regulator of phosphatidylinositol 4,5-bisphosphate turnover and negatively regulates signaling through the cell integrity pathway. Involved in rDNA silencing. This is Increased rDNA silencing protein 4 (IRS4) from Candida glabrata (strain ATCC 2001 / BCRC 20586 / JCM 3761 / NBRC 0622 / NRRL Y-65 / CBS 138) (Yeast).